A 289-amino-acid chain; its full sequence is Glucosamine-6-phosphate deaminase 1 (289 aa).

An N6-acetyllysine modification is found at lysine 64. The active-site Proton acceptor; for enolization step is the aspartate 72. Residue aspartate 141 is the For ring-opening step of the active site. Histidine 143 acts as the Proton acceptor; for ring-opening step in catalysis. The active-site For ring-opening step is glutamate 148. Position 161 is a phosphothreonine (threonine 161).

The protein belongs to the glucosamine/galactosamine-6-phosphate isomerase family. In terms of assembly, homohexamer. As to expression, at the equatorial segment of the sperm head.

It is found in the cytoplasm. The catalysed reaction is alpha-D-glucosamine 6-phosphate + H2O = beta-D-fructose 6-phosphate + NH4(+). It participates in nucleotide-sugar biosynthesis; UDP-N-acetyl-alpha-D-glucosamine biosynthesis; alpha-D-glucosamine 6-phosphate from D-fructose 6-phosphate: step 1/1. With respect to regulation, allosterically activated by N-acetylglucosamine-6-phosphate (GlcNAc6P). Catalyzes the reversible conversion of alpha-D-glucosamine 6-phosphate (GlcN-6P) into beta-D-fructose 6-phosphate (Fru-6P) and ammonium ion, a regulatory reaction step in de novo uridine diphosphate-N-acetyl-alpha-D-glucosamine (UDP-GlcNAc) biosynthesis via hexosamine pathway. Deamination is coupled to aldo-keto isomerization mediating the metabolic flux from UDP-GlcNAc toward Fru-6P. At high ammonium level can drive amination and isomerization of Fru-6P toward hexosamines and UDP-GlcNAc synthesis. Has a role in fine tuning the metabolic fluctuations of cytosolic UDP-GlcNAc and their effects on hyaluronan synthesis that occur during tissue remodeling. Seems to trigger calcium oscillations in mammalian eggs. These oscillations serve as the essential trigger for egg activation and early development of the embryo. This Mesocricetus auratus (Golden hamster) protein is Glucosamine-6-phosphate deaminase 1.